The primary structure comprises 150 residues: Testis-expressed protein 22 (150 aa).

Residues 1–23 show a composition bias toward basic and acidic residues; the sequence is MDSRKLSPRGKKLESHLSQEHRR. Positions 1-26 are disordered; the sequence is MDSRKLSPRGKKLESHLSQEHRRPPL.

Its subcellular location is the cytoplasm. It localises to the cytoplasmic vesicle. The protein localises to the secretory vesicle. The protein resides in the acrosome. The protein is Testis-expressed protein 22 (TEX22) of Homo sapiens (Human).